The chain runs to 209 residues: Thiamine-phosphate synthase (209 aa).

Residues 35-39 and Asn-67 contribute to the 4-amino-2-methyl-5-(diphosphooxymethyl)pyrimidine site; that span reads QLRNK. Mg(2+) is bound by residues Asp-68 and Asp-87. Ser-106 lines the 4-amino-2-methyl-5-(diphosphooxymethyl)pyrimidine pocket. A 2-[(2R,5Z)-2-carboxy-4-methylthiazol-5(2H)-ylidene]ethyl phosphate-binding site is contributed by 132 to 134; it reads TGS. Lys-135 is a 4-amino-2-methyl-5-(diphosphooxymethyl)pyrimidine binding site. 2-[(2R,5Z)-2-carboxy-4-methylthiazol-5(2H)-ylidene]ethyl phosphate contacts are provided by residues Gly-163 and 183-184; that span reads IS.

This sequence belongs to the thiamine-phosphate synthase family. The cofactor is Mg(2+).

The catalysed reaction is 2-[(2R,5Z)-2-carboxy-4-methylthiazol-5(2H)-ylidene]ethyl phosphate + 4-amino-2-methyl-5-(diphosphooxymethyl)pyrimidine + 2 H(+) = thiamine phosphate + CO2 + diphosphate. It catalyses the reaction 2-(2-carboxy-4-methylthiazol-5-yl)ethyl phosphate + 4-amino-2-methyl-5-(diphosphooxymethyl)pyrimidine + 2 H(+) = thiamine phosphate + CO2 + diphosphate. The enzyme catalyses 4-methyl-5-(2-phosphooxyethyl)-thiazole + 4-amino-2-methyl-5-(diphosphooxymethyl)pyrimidine + H(+) = thiamine phosphate + diphosphate. The protein operates within cofactor biosynthesis; thiamine diphosphate biosynthesis; thiamine phosphate from 4-amino-2-methyl-5-diphosphomethylpyrimidine and 4-methyl-5-(2-phosphoethyl)-thiazole: step 1/1. In terms of biological role, condenses 4-methyl-5-(beta-hydroxyethyl)thiazole monophosphate (THZ-P) and 2-methyl-4-amino-5-hydroxymethyl pyrimidine pyrophosphate (HMP-PP) to form thiamine monophosphate (TMP). The polypeptide is Thiamine-phosphate synthase (Chlorobium phaeovibrioides (strain DSM 265 / 1930) (Prosthecochloris vibrioformis (strain DSM 265))).